The primary structure comprises 195 residues: Probable GTP-binding protein EngB (195 aa).

Residues 24–195 form the EngB-type G domain; sequence GLSEVALSGR…QIWDLIANYL (172 aa). GTP-binding positions include 32-39, 59-63, 77-80, 144-147, and 176-178; these read GRSNVGKS, GKTQT, DVPG, TKED, and YSS. Mg(2+)-binding residues include S39 and T61.

It belongs to the TRAFAC class TrmE-Era-EngA-EngB-Septin-like GTPase superfamily. EngB GTPase family. Requires Mg(2+) as cofactor.

Its function is as follows. Necessary for normal cell division and for the maintenance of normal septation. This Staphylococcus haemolyticus (strain JCSC1435) protein is Probable GTP-binding protein EngB.